Reading from the N-terminus, the 570-residue chain is Putative diflavin flavoprotein A 5 (570 aa).

A zinc metallo-hydrolase region spans residues 38-231 (ERGTTSNSYV…LQVRLYAVGH (194 aa)). The region spanning 260-402 (VALLYASAYG…VGTDFAQTLK (143 aa)) is the Flavodoxin-like domain. The flavodoxin-reductase-like stretch occupies residues 421–570 (VGRIVGSVCV…INHRKTGNHY (150 aa)).

In the N-terminal section; belongs to the zinc metallo-hydrolase group 3 family. This sequence in the C-terminal section; belongs to the flavodoxin reductase family. Requires Fe cation as cofactor.

Functionally, mediates electron transfer from NADH to oxygen, reducing it to water. This modular protein has 3 redox cofactors, in other organisms the same activity requires 2 or 3 proteins. In Nostoc sp. (strain PCC 7120 / SAG 25.82 / UTEX 2576), this protein is Putative diflavin flavoprotein A 5 (dfa5).